The chain runs to 992 residues: GATOR2 complex protein WDR59 (992 aa).

7 WD repeats span residues 57-98, 103-143, 146-185, 189-229, 232-276, 278-318, and 319-362; these read QSKW…GEVG, GHTR…KPTV, SAVAGASQVKWNKKNANYLATSHDGDVRIWDKRKPSTAVE, AHLS…KYLN, PCQV…APVH, FVGH…RVDY, and QMQR…SLSH. The disordered stretch occupies residues 343-373; that stretch reads PEPEKTPHPQDIDHQPSLSHGEEDAIKEDPP. Positions 344-373 are enriched in basic and acidic residues; sequence EPEKTPHPQDIDHQPSLSHGEEDAIKEDPP. Residues 393-494 form the RWD domain; it reads QEFSLINVQI…RQLVSCLESF (102 aa). Ser-564 is subject to Phosphoserine. A WD 8 repeat occupies 660-706; it reads KSLGELYILNVNDTQETCQKNATSAMLVGRKDLVQVWSLATVATDLC. 3 positions are modified to phosphoserine: Ser-839, Ser-840, and Ser-848. Residues 849–870 form a disordered region; sequence LTYSDPRERERDQHDKNKRLLD. The span at 853-869 shows a compositional bias: basic and acidic residues; the sequence is DPRERERDQHDKNKRLL. The C4-type zinc finger occupies 919 to 939; the sequence is YCSHCRSEVRGTQCAICKGFT. Zn(2+) is bound by residues Cys-920, Cys-923, Cys-932, Cys-935, Cys-945, Cys-956, His-961, His-964, His-967, Cys-978, Cys-982, Cys-984, and Cys-986. The RING-type; atypical zinc-finger motif lies at 940-989; sequence FQCAICHVAVRGSSNFCLTCGHGGHTSHMMEWFRTQEVCPTGCGCHCLLE.

This sequence belongs to the WD repeat WDR59 family. In terms of assembly, component of the GATOR2 subcomplex, composed of MIOS, SEC13, SEH1L, WDR24 and WDR59. The GATOR2 complex interacts with CASTOR1 and CASTOR2; the interaction is negatively regulated by arginine. The GATOR2 complex interacts with SESN1, SESN2 and SESN3; the interaction is negatively regulated by amino acids. Interacts with DDB1-CUL4A/B E3 ligase complexes.

It localises to the lysosome membrane. The GATOR2 complex is negatively regulated by the upstream amino acid sensors CASTOR1 and SESN2, which sequester the GATOR2 complex in absence of amino acids. In the presence of abundant amino acids, GATOR2 is released from CASTOR1 and SESN2 and activated. Functionally, as a component of the GATOR2 complex, functions as an activator of the amino acid-sensing branch of the mTORC1 signaling pathway. The GATOR2 complex indirectly activates mTORC1 through the inhibition of the GATOR1 subcomplex. GATOR2 probably acts as an E3 ubiquitin-protein ligase toward GATOR1. In the presence of abundant amino acids, the GATOR2 complex mediates ubiquitination of the NPRL2 core component of the GATOR1 complex, leading to GATOR1 inactivation. In the absence of amino acids, GATOR2 is inhibited, activating the GATOR1 complex. The polypeptide is GATOR2 complex protein WDR59 (Mus musculus (Mouse)).